The chain runs to 312 residues: Ribosomal RNA small subunit methyltransferase H (312 aa).

S-adenosyl-L-methionine contacts are provided by residues 35 to 37, aspartate 55, aspartate 101, and glutamine 108; that span reads GGH. The tract at residues 285-306 is disordered; that stretch reads ALKPSEHEVTENSRSRSSVLRV. A compositionally biased stretch (basic and acidic residues) spans 287–298; sequence KPSEHEVTENSR.

Belongs to the methyltransferase superfamily. RsmH family.

Its subcellular location is the cytoplasm. It catalyses the reaction cytidine(1402) in 16S rRNA + S-adenosyl-L-methionine = N(4)-methylcytidine(1402) in 16S rRNA + S-adenosyl-L-homocysteine + H(+). In terms of biological role, specifically methylates the N4 position of cytidine in position 1402 (C1402) of 16S rRNA. The sequence is that of Ribosomal RNA small subunit methyltransferase H from Aeromonas salmonicida (strain A449).